A 132-amino-acid polypeptide reads, in one-letter code: Matrix protein (132 aa).

It is found in the virion membrane. Its function is as follows. Envelope protein that may play a role in host-cell attachment and viral genome entry. This is Matrix protein from Halorubrum pleomorphic virus 1 (HRPV-1).